The sequence spans 292 residues: NAD kinase (292 aa).

The active-site Proton acceptor is the Asp73. NAD(+) is bound by residues 73-74 (DG), 147-148 (NE), His158, Arg175, Asp177, 188-193 (TAYSLS), and Gln247.

The protein belongs to the NAD kinase family. A divalent metal cation serves as cofactor.

Its subcellular location is the cytoplasm. It carries out the reaction NAD(+) + ATP = ADP + NADP(+) + H(+). In terms of biological role, involved in the regulation of the intracellular balance of NAD and NADP, and is a key enzyme in the biosynthesis of NADP. Catalyzes specifically the phosphorylation on 2'-hydroxyl of the adenosine moiety of NAD to yield NADP. This chain is NAD kinase, found in Shigella boydii serotype 18 (strain CDC 3083-94 / BS512).